A 119-amino-acid chain; its full sequence is uncharacterized protein (119 aa).

Helical transmembrane passes span 28-48, 55-75, and 80-100; these read AWTT…HLVF, IEVV…NLAI, and PIGK…GIIV.

It to M.tuberculosis Rv1342c.

The protein localises to the cell membrane. This is an uncharacterized protein from Mycobacterium leprae (strain TN).